The following is a 390-amino-acid chain: Succinate--CoA ligase [ADP-forming] subunit beta (390 aa).

The ATP-grasp domain occupies 9–245 (KHLLKKYNIP…TTQEDEHETM (237 aa)). Residues lysine 46, 53 to 55 (GRG), glutamate 99, serine 102, and glutamate 107 each bind ATP. Residues asparagine 200 and aspartate 214 each coordinate Mg(2+). Residues asparagine 265 and 322 to 324 (GIV) each bind substrate.

It belongs to the succinate/malate CoA ligase beta subunit family. In terms of assembly, heterotetramer of two alpha and two beta subunits. The cofactor is Mg(2+).

The catalysed reaction is succinate + ATP + CoA = succinyl-CoA + ADP + phosphate. It catalyses the reaction GTP + succinate + CoA = succinyl-CoA + GDP + phosphate. It functions in the pathway carbohydrate metabolism; tricarboxylic acid cycle; succinate from succinyl-CoA (ligase route): step 1/1. In terms of biological role, succinyl-CoA synthetase functions in the citric acid cycle (TCA), coupling the hydrolysis of succinyl-CoA to the synthesis of either ATP or GTP and thus represents the only step of substrate-level phosphorylation in the TCA. The beta subunit provides nucleotide specificity of the enzyme and binds the substrate succinate, while the binding sites for coenzyme A and phosphate are found in the alpha subunit. The sequence is that of Succinate--CoA ligase [ADP-forming] subunit beta from Coxiella burnetii (strain CbuK_Q154) (Coxiella burnetii (strain Q154)).